The chain runs to 142 residues: Hemoglobin subunit alpha 1 (142 aa).

Ser1 bears the N-acetylserine mark. The Globin domain occupies 1 to 142; it reads SLSDKDKAAV…VSLALSERYR (142 aa). Position 59 (His59) interacts with O2. His88 lines the heme b pocket.

This sequence belongs to the globin family. In terms of assembly, hb1 is a heterotetramer of two alpha-1 chains and two beta-1 chains. Hb2 is a heterotetramer of two alpha-2 chains and two beta-1 chains. HbC is a heterotetramer of two alpha-1 chains and two beta-2 chains. Red blood cells.

Functionally, involved in oxygen transport from gills to the various peripheral tissues. The chain is Hemoglobin subunit alpha 1 from Eleginops maclovinus (Patagonian blennie).